Here is a 362-residue protein sequence, read N- to C-terminus: Adenosine deaminase (362 aa).

Zn(2+)-binding residues include His-19 and His-21. Residues His-21, Asp-23, and Gly-181 each coordinate substrate. Position 208 (His-208) interacts with Zn(2+). Catalysis depends on Glu-211, which acts as the Proton donor. Asp-300 lines the Zn(2+) pocket.

The protein belongs to the metallo-dependent hydrolases superfamily. Adenosine and AMP deaminases family. Adenosine deaminase subfamily. Zn(2+) is required as a cofactor.

It carries out the reaction adenosine + H2O + H(+) = inosine + NH4(+). The catalysed reaction is 2'-deoxyadenosine + H2O + H(+) = 2'-deoxyinosine + NH4(+). Catalyzes the hydrolytic deamination of adenosine and 2-deoxyadenosine. The chain is Adenosine deaminase from Mycobacterium sp. (strain JLS).